The primary structure comprises 565 residues: Periplasmic trehalase (565 aa).

The signal sequence occupies residues 1–30; sequence MKSPAPSRPQKMALIPACIFLCFAALSVQA. Substrate-binding positions include arginine 152, 159 to 160, asparagine 196, 205 to 207, 277 to 279, and glycine 310; these read WD, RSQ, and RPE. Catalysis depends on proton donor/acceptor residues aspartate 312 and glutamate 496. A substrate-binding site is contributed by glutamate 511. A disordered region spans residues 538-565; it reads PCDNVPATRPTVKSATTQPSTKEAQPTP. Positions 548–565 are enriched in polar residues; that stretch reads TVKSATTQPSTKEAQPTP.

This sequence belongs to the glycosyl hydrolase 37 family. Monomer.

Its subcellular location is the periplasm. It catalyses the reaction alpha,alpha-trehalose + H2O = alpha-D-glucose + beta-D-glucose. Functionally, provides the cells with the ability to utilize trehalose at high osmolarity by splitting it into glucose molecules that can subsequently be taken up by the phosphotransferase-mediated uptake system. The polypeptide is Periplasmic trehalase (Escherichia coli O8 (strain IAI1)).